We begin with the raw amino-acid sequence, 218 residues long: Ribose-5-phosphate isomerase A (218 aa).

Substrate contacts are provided by residues 28–31, 81–84, and 94–97; these read TGST, DGAD, and KGGG. Glu103 acts as the Proton acceptor in catalysis. Substrate is bound at residue Lys121.

This sequence belongs to the ribose 5-phosphate isomerase family. Homodimer.

It carries out the reaction aldehydo-D-ribose 5-phosphate = D-ribulose 5-phosphate. Its pathway is carbohydrate degradation; pentose phosphate pathway; D-ribose 5-phosphate from D-ribulose 5-phosphate (non-oxidative stage): step 1/1. In terms of biological role, catalyzes the reversible conversion of ribose-5-phosphate to ribulose 5-phosphate. The sequence is that of Ribose-5-phosphate isomerase A from Vibrio atlanticus (strain LGP32) (Vibrio splendidus (strain Mel32)).